The chain runs to 370 residues: MDSYWRLKNLVNDLPVSTSLSRQGSIYSWTVDQFQTSLGLDCGSMNMDELVKHISSAEETQEGSQRQGSTTLPPTLSKQNVGEVWKSITEEKHTNNNGGVTNITHLQGQQTLGEITLEEFFIRAGARGGNTNGGSIHDSSSSISGNPHTSLGVQIQPKAMVSDFMNNMVPRSHDSYLHQNVNGSMSTYQPQQSIMSMPNGYSYGKQIRFSNGSLGSGNQSLQDTKRSLVPSVATIPSEAITCSPVTPFPTLNGKQKINGESSLLSPSPYISNGSTSTRGGKINSEITAEKQFVDKKLRRKIKNRESAARSRARKQAQTMEVEVELENLKKDYEELLKQHVELRKRQMEPGMISLHERPERKLRRTKSDIK.

A phosphoserine mark is found at Ser25, Ser44, and Ser69. The tract at residues 56-77 is disordered; the sequence is SAEETQEGSQRQGSTTLPPTLS. Over residues 62-77 the composition is skewed to polar residues; the sequence is EGSQRQGSTTLPPTLS. At Thr111 the chain carries Phosphothreonine. The span at 260–278 shows a compositional bias: polar residues; it reads ESSLLSPSPYISNGSTSTR. Residues 260-281 form a disordered region; that stretch reads ESSLLSPSPYISNGSTSTRGGK. The 64-residue stretch at 293 to 356 folds into the bZIP domain; the sequence is VDKKLRRKIK…MEPGMISLHE (64 aa). The tract at residues 295-314 is basic motif; that stretch reads KKLRRKIKNRESAARSRARK. A leucine-zipper region spans residues 328–342; it reads LKKDYEELLKQHVEL. The interval 349–370 is disordered; the sequence is PGMISLHERPERKLRRTKSDIK. The span at 354–370 shows a compositional bias: basic and acidic residues; it reads LHERPERKLRRTKSDIK.

This sequence belongs to the bZIP family. ABI5 subfamily. As to quaternary structure, DNA-binding heterodimer.

The protein localises to the nucleus. Functionally, could participate in abscisic acid-regulated gene expression. The protein is ABSCISIC ACID-INSENSITIVE 5-like protein 8 (BZIP15) of Arabidopsis thaliana (Mouse-ear cress).